The primary structure comprises 163 residues: Transcription antitermination protein NusB (163 aa).

It belongs to the NusB family.

In terms of biological role, involved in transcription antitermination. Required for transcription of ribosomal RNA (rRNA) genes. Binds specifically to the boxA antiterminator sequence of the ribosomal RNA (rrn) operons. This chain is Transcription antitermination protein NusB, found in Mycolicibacterium vanbaalenii (strain DSM 7251 / JCM 13017 / BCRC 16820 / KCTC 9966 / NRRL B-24157 / PYR-1) (Mycobacterium vanbaalenii).